We begin with the raw amino-acid sequence, 991 residues long: Valine--tRNA ligase (991 aa).

The 'HIGH' region motif lies at 43-53 (PNVTGTLHMGH). Residues 582–586 (KMSKS) carry the 'KMSKS' region motif. Lysine 585 is an ATP binding site. A disordered region spans residues 689–711 (AHSPAQHQAGQDGQDAPRTPQPR). A compositionally biased stretch (low complexity) spans 693–704 (AQHQAGQDGQDA). A coiled-coil region spans residues 925 to 988 (LIDVDAERAR…TQLNGLRERR (64 aa)).

Belongs to the class-I aminoacyl-tRNA synthetase family. ValS type 1 subfamily. As to quaternary structure, monomer.

It localises to the cytoplasm. The catalysed reaction is tRNA(Val) + L-valine + ATP = L-valyl-tRNA(Val) + AMP + diphosphate. Its function is as follows. Catalyzes the attachment of valine to tRNA(Val). As ValRS can inadvertently accommodate and process structurally similar amino acids such as threonine, to avoid such errors, it has a 'posttransfer' editing activity that hydrolyzes mischarged Thr-tRNA(Val) in a tRNA-dependent manner. This chain is Valine--tRNA ligase, found in Xylella fastidiosa (strain M12).